A 414-amino-acid polypeptide reads, in one-letter code: Serine hydroxymethyltransferase (414 aa).

(6S)-5,6,7,8-tetrahydrofolate contacts are provided by residues Leu-117 and 121-123; that span reads GHL. N6-(pyridoxal phosphate)lysine is present on Lys-226. Residues Glu-241 and 349 to 351 each bind (6S)-5,6,7,8-tetrahydrofolate; that span reads TPF.

It belongs to the SHMT family. Homodimer. Requires pyridoxal 5'-phosphate as cofactor.

The protein resides in the cytoplasm. It catalyses the reaction (6R)-5,10-methylene-5,6,7,8-tetrahydrofolate + glycine + H2O = (6S)-5,6,7,8-tetrahydrofolate + L-serine. The protein operates within one-carbon metabolism; tetrahydrofolate interconversion. Its pathway is amino-acid biosynthesis; glycine biosynthesis; glycine from L-serine: step 1/1. Functionally, catalyzes the reversible interconversion of serine and glycine with tetrahydrofolate (THF) serving as the one-carbon carrier. Also exhibits THF-independent aldolase activity toward beta-hydroxyamino acids, producing glycine and aldehydes, via a retro-aldol mechanism. The polypeptide is Serine hydroxymethyltransferase (Methanothrix thermoacetophila (strain DSM 6194 / JCM 14653 / NBRC 101360 / PT) (Methanosaeta thermophila)).